The chain runs to 492 residues: Aspartyl/glutamyl-tRNA(Asn/Gln) amidotransferase subunit B (492 aa).

Belongs to the GatB/GatE family. GatB subfamily. In terms of assembly, heterotrimer of A, B and C subunits.

The enzyme catalyses L-glutamyl-tRNA(Gln) + L-glutamine + ATP + H2O = L-glutaminyl-tRNA(Gln) + L-glutamate + ADP + phosphate + H(+). The catalysed reaction is L-aspartyl-tRNA(Asn) + L-glutamine + ATP + H2O = L-asparaginyl-tRNA(Asn) + L-glutamate + ADP + phosphate + 2 H(+). Functionally, allows the formation of correctly charged Asn-tRNA(Asn) or Gln-tRNA(Gln) through the transamidation of misacylated Asp-tRNA(Asn) or Glu-tRNA(Gln) in organisms which lack either or both of asparaginyl-tRNA or glutaminyl-tRNA synthetases. The reaction takes place in the presence of glutamine and ATP through an activated phospho-Asp-tRNA(Asn) or phospho-Glu-tRNA(Gln). The sequence is that of Aspartyl/glutamyl-tRNA(Asn/Gln) amidotransferase subunit B from Bradyrhizobium diazoefficiens (strain JCM 10833 / BCRC 13528 / IAM 13628 / NBRC 14792 / USDA 110).